A 758-amino-acid polypeptide reads, in one-letter code: MAVSARPARAPRGSDKVKKDKAAQTSGPRQGSRMGKLLGFEWTDVSSWERLVTLLNRPTDPAGLAVFRFLFGLMMVLDIPQERGLSSLDRRYLDGLEVCRFPLLDALQPLPLDWMYLIYTIMFLGALGMMLGLCYRISCVLFLLPYWYVFLLDKTSWNNHSYLYGLLAFQLTFVDAHHYWSVDGLLRARKRNAHVPLWNYAVLRGQIFIVYFIAGIKKLDADWVEGYSMEYLSRHWLFSPFKLVLSEEMTSLLVVHWCGLLLDLSAGFLLFFDASRPIGFVFVSYFHCMNSQLFSIGMFPYVMLASSPLFCSPEWPRKLVAHCPKKLQELLPLRTAPQPSTSCMYKRSRARGSQKPGLRHKLSTAFTLLYLLEQLFLPYSHFLTQGYNNWTNGLYGYSWDMMVHSRSHQHVKITYRDGRTGELGYLNPGVFTQSRRWKDHADMLKQYATCLSRLLPKYNVTEPQIYFDIWVSINDRFQQRIFDPRVDIVQAAWSPFQRTPWLQPLLMDLSPWRTKLQEIKSSLDNHTEVVFIADFPGLHLENFVSEDLGNTSIQLLQGEVTVELVAEQKNQTLQEGEKMQLPAGEYHKVYTVSSSPSCYMYIYVNTTEVALEQDLAYLQELKEKVENGSETGPLPPELQPLLEGEVKGGPEPTPLVQTFLRRQQRLQEIERRRNAPFHERLVRFLLRKLFIFRRSFLMTCISLRNLAFGRPSLEQLAQEVTYANLRPFEPAGEPSPVNTDSSNPNPPEPDSHPVHSEF.

A disordered region spans residues Met1 to Met34. An N-acetylalanine modification is found at Ala2. Over Ala2 to Asp60 the chain is Cytoplasmic. Residues Arg12–Ala22 are compositionally biased toward basic and acidic residues. A helical transmembrane segment spans residues Pro61–Gln81. Residues Glu82–Asp113 are Lumenal-facing. Cysteines 99 and 450 form a disulfide. Residues Trp114–Cys134 form a helical membrane-spanning segment. Over Tyr135–Arg136 the chain is Cytoplasmic. Residues Ile137 to Trp157 traverse the membrane as a helical segment. Residues Asn158–Gln292 are Lumenal-facing. Residues Leu293–Pro313 traverse the membrane as a helical segment. At Glu314–Ser363 the chain is on the cytoplasmic side. A helical transmembrane segment spans residues Thr364 to Thr384. Over Gln385–Phe758 the chain is Lumenal. Positions Pro727–Phe758 are disordered. Residues Pro749 to Phe758 show a composition bias toward basic and acidic residues.

In terms of assembly, monomer. May interact with CALU. Post-translationally, the N-terminus is blocked.

The protein resides in the endoplasmic reticulum membrane. The enzyme catalyses 4-carboxy-L-glutamyl-[protein] + 2,3-epoxyphylloquinone + H2O + H(+) = phylloquinol + L-glutamyl-[protein] + CO2 + O2. Mediates the vitamin K-dependent carboxylation of glutamate residues to calcium-binding gamma-carboxyglutamate (Gla) residues with the concomitant conversion of the reduced hydroquinone form of vitamin K to vitamin K epoxide. Catalyzes gamma-carboxylation of various proteins, such as blood coagulation factors (F2, F7, F9 and F10), osteocalcin (BGLAP) or matrix Gla protein (MGP). This Bos taurus (Bovine) protein is Vitamin K-dependent gamma-carboxylase (GGCX).